Consider the following 554-residue polypeptide: Bifunctional epoxide hydrolase 2 (554 aa).

The segment at 1-224 (MALRVAAFDL…KVTGTQFPEA (224 aa)) is phosphatase. Positions 9 and 11 each coordinate Mg(2+). N6-succinyllysine is present on K55. 123-124 (TN) contacts phosphate. K176 carries the post-translational modification N6-acetyllysine; alternate. The residue at position 176 (K176) is an N6-succinyllysine; alternate. Position 185 (D185) interacts with Mg(2+). An N6-acetyllysine mark is found at K191 and K215. An epoxide hydrolase region spans residues 233-554 (NDVSHGYVTV…VQNPSVTSKI (322 aa)). The 274-residue stretch at 257 to 530 (PALCLCHGFP…CGHWTQIEKP (274 aa)) folds into the AB hydrolase-1 domain. Residue D333 is the Nucleophile of the active site. A Phosphoserine modification is found at S368. K371 bears the N6-succinyllysine mark. A substrate-binding site is contributed by Y381. An N6-succinyllysine mark is found at K420 and K454. Y465 functions as the Proton donor in the catalytic mechanism. At K504 the chain carries N6-succinyllysine. K508 carries the post-translational modification N6-acetyllysine; alternate. K508 is subject to N6-succinyllysine; alternate. The S-(15-deoxy-Delta12,14-prostaglandin J2-9-yl)cysteine moiety is linked to residue C521. The Proton acceptor role is filled by H523. The Microbody targeting signal motif lies at 552-554 (SKI). Residue K553 is modified to N6-succinyllysine.

This sequence belongs to the AB hydrolase superfamily. Epoxide hydrolase family. Homodimer. It depends on Mg(2+) as a cofactor. The N-terminus is blocked. Post-translationally, the covalent modification of cysteine by 15-deoxy-Delta12,14-prostaglandin-J2 is autocatalytic and reversible. It may occur as an alternative to other cysteine modifications, such as S-nitrosylation and S-palmitoylation. In terms of tissue distribution, detected in liver, intestine, ovary and kidney. Detected at low levels in heart and muscle.

Its subcellular location is the cytoplasm. It is found in the peroxisome. It catalyses the reaction an epoxide + H2O = an ethanediol. It carries out the reaction (9S,10S)-10-hydroxy-9-(phosphooxy)octadecanoate + H2O = (9S,10S)-9,10-dihydroxyoctadecanoate + phosphate. The catalysed reaction is 8-hydroxy-(11S,12S)-epoxy-(5Z,9E,14Z)-eicosatrienoate + H2O = (8,11R,12S)-trihydroxy-(5Z,9E,14Z)-eicosatrienoate. The enzyme catalyses 10-hydroxy-(11S,12S)-epoxy- (5Z,8Z,14Z)-eicosatrienoate + H2O = (10,11S,12R)-trihydroxy-(5Z,8Z,14Z)-eicosatrienoate. It catalyses the reaction (8S,9R)-epoxy-(5Z,11Z,14Z)-eicosatrienoate + H2O = (8S,9S)-dihydroxy-(5Z,11Z,14Z)-eicosatrienoate. It carries out the reaction (11S,12R)-epoxy-(5Z,8Z,14Z)-eicosatrienoate + H2O = (11R,12R)-dihydroxy-(5Z,8Z,14Z)-eicosatrienoate. The catalysed reaction is (11S,12R)-epoxy-(5Z,8Z,14Z)-eicosatrienoate + H2O = (11S,12S)-dihydroxy-(5Z,8Z,14Z)-eicosatrienoate. The enzyme catalyses (14S,15R)-epoxy-(5Z,8Z,11Z)-eicosatrienoate + H2O = (14R,15R)-dihydroxy-(5Z,8Z,11Z)-eicosatrienoate. It catalyses the reaction (14S,15R)-epoxy-(5Z,8Z,11Z)-eicosatrienoate + H2O = (14S,15S)-dihydroxy-(5Z,8Z,11Z)-eicosatrienoate. It carries out the reaction (11R,12S)-epoxy-(5Z,8Z,14Z)-eicosatrienoate + H2O = (11S,12S)-dihydroxy-(5Z,8Z,14Z)-eicosatrienoate. The catalysed reaction is (11R,12S)-epoxy-(5Z,8Z,14Z)-eicosatrienoate + H2O = (11R,12R)-dihydroxy-(5Z,8Z,14Z)-eicosatrienoate. The enzyme catalyses (8S,9R)-epoxy-(5Z,11Z,14Z)-eicosatrienoate + H2O = (8R,9R)-dihydroxy-(5Z,11Z,14Z)-eicosatrienoate. It catalyses the reaction 12-phosphooxy-(9Z)-octadecenoate + H2O = 12-hydroxy-(9Z)-octadecenoate + phosphate. It carries out the reaction 12-phosphooxy-(9E)-octadecenoate + H2O = 12-hydroxy-(9E)-octadecenoate + phosphate. The catalysed reaction is 12-(phosphooxy)octadecanoate + H2O = 12-hydroxyoctadecanoate + phosphate. The enzyme catalyses 8,9-epoxy-(5Z,11Z,14Z)-eicosatrienoate + H2O = 8,9-dihydroxy-(5Z,11Z,14Z)-eicosatrienoate. It catalyses the reaction 11,12-epoxy-(5Z,8Z,14Z)-eicosatrienoate + H2O = 11,12-dihydroxy-(5Z,8Z,14Z)-eicosatrienoate. It carries out the reaction 14,15-epoxy-(5Z,8Z,11Z)-eicosatrienoate + H2O = 14,15-dihydroxy-(5Z,8Z,11Z)-eicosatrienoate. The catalysed reaction is 9,10-epoxy-(12Z)-octadecenoate + H2O = 9,10-dihydroxy-(12Z)-octadecenoate. The enzyme catalyses 1-tetradecanoyl-sn-glycerol 3-phosphate + H2O = 1-tetradecanoyl-sn-glycerol + phosphate. It catalyses the reaction 1-octadecanoyl-sn-glycero-3-phosphate + H2O = 1-octadecanoyl-sn-glycerol + phosphate. It carries out the reaction 1-(5Z,8Z,11Z,14Z-eicosatetraenoyl)-sn-glycero-3-phosphate + H2O = 1-(5Z,8Z,11Z,14Z-eicosatetraenoyl)-sn-glycerol + phosphate. The catalysed reaction is 1-hexadecanoyl-sn-glycero-3-phosphate + H2O = 1-hexadecanoyl-sn-glycerol + phosphate. The enzyme catalyses 1-(9Z-octadecenoyl)-sn-glycero-3-phosphate + H2O = 1-(9Z-octadecenoyl)-sn-glycerol + phosphate. It catalyses the reaction (14R,15S)-epoxy-(5Z,8Z,11Z)-eicosatrienoate + H2O = (14R,15R)-dihydroxy-(5Z,8Z,11Z)-eicosatrienoate. With respect to regulation, inhibited by 1-(1-acetylpiperidin-4-yl)-3-(4-(trifl uoromethoxy)phenyl)urea (TPAU), 1-cyclohexyl-3-dodecylurea (CDU), 12-(3-adamantan-1-yl-ureido)-dodecanoic acid (AUDA), 1-((3S, 5S, 7S)-adamantan-1-yl)-3-(5-(2-(2-ethoxyethoxy) ethoxy)pentyl)urea (AEPU), N-adamantyl-N[']-cyclohexyl urea (ACU), 4-(((1S, 4S)-4-(3-((3S, 5S, 7S)-adamantan-1-yl) ureido)cyclohexyl)oxy)benzoic acid (c-AUCB), 4-(((1R, 4R)-4-(3-((3S, 5S, 7S)-adamantan-1-yl)ureido)cyclohexyl)oxy)benzoic acid (t-AUCB), 4-(((1R, 4R)-4-(3-(4(trifluoromethoxy)phenyl)ureido)cyclohexyl)oxy)benzoic acid (t-TAUCB) and to a lesser extent by 8-(3-((3S, 5S, 7S)-adamantan-1-yl)ureido) octanoic acid (AUOA). Phosphatase activity is inhibited by dodecyl-phosphate, phospholipids such as phospho-lysophosphatidic acids and fatty acids such as palmitic acid and lauric acid. Its function is as follows. Bifunctional enzyme. The C-terminal domain has epoxide hydrolase activity and acts on epoxides (alkene oxides, oxiranes) and arene oxides. Plays a role in xenobiotic metabolism by degrading potentially toxic epoxides. Also determines steady-state levels of physiological mediators. Bifunctional enzyme. The N-terminal domain has lipid phosphatase activity, with the highest activity towards threo-9,10-phosphonooxy-hydroxy-octadecanoic acid, followed by erythro-9,10-phosphonooxy-hydroxy-octadecanoic acid, 12-phosphonooxy-octadec-9Z-enoic acid and 12-phosphonooxy-octadec-9E-enoic acid. Has phosphatase activity toward lyso-glycerophospholipids with also some lower activity toward lysolipids of sphingolipid and isoprenoid phosphates. The protein is Bifunctional epoxide hydrolase 2 of Mus musculus (Mouse).